We begin with the raw amino-acid sequence, 341 residues long: Protein BIG GRAIN 1-like C (341 aa).

2 disordered regions span residues 28 to 61 and 76 to 138; these read DGLQSDLKGSINENVSSSSSSPSPNKKDDKLTTL and SSTT…SDDD. A compositionally biased stretch (basic and acidic residues) spans 52 to 61; that stretch reads NKKDDKLTTL. The segment covering 76-92 has biased composition (low complexity); the sequence is SSTTTTNSSDSSSFSSS. The segment covering 105-138 has biased composition (basic and acidic residues); it reads KLAEQGKRSGDERQRTKRTVMDNDSRLFSKSDDD.

This sequence belongs to the BIG GRAIN 1 (BG1) plant protein family.

The protein resides in the cell membrane. Its function is as follows. Involved in auxin transport. Regulator of the auxin signaling pathway. This is Protein BIG GRAIN 1-like C from Arabidopsis thaliana (Mouse-ear cress).